The following is a 522-amino-acid chain: Ankyrin repeat and death domain-containing protein 1A (522 aa).

11 ANK repeats span residues 14–43, 47–76, 90–119, 123–152, 158–187, 191–220, 224–253, 257–286, 290–319, 323–352, and 356–385; these read PLER…NTRA, VGRV…AVDE, FGMN…KIHC, DGLT…DVAL, LGRT…DHNV, EGNT…DLEE, EGLT…TVNA, KNLS…CANV, QGAS…DVNA, RQQT…DLNL, and QGKT…FYRW. A Death domain is found at 413 to 501; it reads SVLWRLASRY…DLAGWSTMAR (89 aa).

This Homo sapiens (Human) protein is Ankyrin repeat and death domain-containing protein 1A (ANKDD1A).